Reading from the N-terminus, the 230-residue chain is Ureidoacrylate amidohydrolase RutB (230 aa).

Aspartate 24 serves as the catalytic Proton acceptor. Lysine 133 is a catalytic residue. Catalysis depends on cysteine 166, which acts as the Nucleophile.

Belongs to the isochorismatase family. RutB subfamily.

It carries out the reaction (Z)-3-ureidoacrylate + H2O + H(+) = (Z)-3-aminoacrylate + NH4(+) + CO2. It catalyses the reaction (Z)-3-ureidoacrylate + H2O = (Z)-3-aminoacrylate + carbamate + H(+). The enzyme catalyses (Z)-2-methylureidoacrylate + H2O + H(+) = (Z)-2-methylaminoacrylate + NH4(+) + CO2. Its function is as follows. Hydrolyzes ureidoacrylate to form aminoacrylate and carbamate. The carbamate hydrolyzes spontaneously, thereby releasing one of the nitrogen atoms of the pyrimidine ring as ammonia and one of its carbon atoms as CO2. This Escherichia coli O44:H18 (strain 042 / EAEC) protein is Ureidoacrylate amidohydrolase RutB.